The primary structure comprises 187 residues: Orotate phosphoribosyltransferase (187 aa).

5-phospho-alpha-D-ribose 1-diphosphate-binding positions include Arg-99, Lys-100, Lys-103, His-105, and 125–133 (DDVITTGGS). Residues Thr-129 and Arg-157 each coordinate orotate.

This sequence belongs to the purine/pyrimidine phosphoribosyltransferase family. PyrE subfamily. As to quaternary structure, homodimer. Mg(2+) serves as cofactor.

It carries out the reaction orotidine 5'-phosphate + diphosphate = orotate + 5-phospho-alpha-D-ribose 1-diphosphate. It participates in pyrimidine metabolism; UMP biosynthesis via de novo pathway; UMP from orotate: step 1/2. Functionally, catalyzes the transfer of a ribosyl phosphate group from 5-phosphoribose 1-diphosphate to orotate, leading to the formation of orotidine monophosphate (OMP). This Leptospira borgpetersenii serovar Hardjo-bovis (strain L550) protein is Orotate phosphoribosyltransferase.